We begin with the raw amino-acid sequence, 540 residues long: Malolactic enzyme (540 aa).

Tyr90 (proton donor) is an active-site residue. Lys163 serves as the catalytic Proton acceptor. Lys163 is a substrate binding site. Residues Glu234, Asp235, and Asp258 each coordinate Mn(2+). Residues 291 to 294 (GGSA), Asn403, and Asn448 contribute to the NAD(+) site. Asn448 contacts substrate.

The protein belongs to the malic enzymes family. As to quaternary structure, homodimer. Requires Mn(2+) as cofactor. NAD(+) serves as cofactor.

The enzyme catalyses (S)-malate + H(+) = (S)-lactate + CO2. In terms of biological role, involved in the malolactic fermentation (MLF) of wine, which results in a natural decrease in acidity and favorable changes in wine flavors. Catalyzes the decarboxylation of L-malate to L-lactate. The chain is Malolactic enzyme from Lactococcus lactis subsp. lactis (strain IL1403) (Streptococcus lactis).